Reading from the N-terminus, the 664-residue chain is Macoilin (664 aa).

The next 4 membrane-spanning stretches (helical) occupy residues 28-48 (TFLY…DFVL), 75-95 (AFSV…LLFI), 120-140 (VCLP…AIRF), and 154-174 (FAAH…KSYV). The segment covering 253-265 (REKGKEKDKDAKK) has biased composition (basic and acidic residues). Positions 253–274 (REKGKEKDKDAKKHNLGINNNN) are disordered. Residue S305 is modified to Phosphoserine. Over residues 320–348 (KNYKNASGVVNSSPRSHSATNGSIPSSSS) the composition is skewed to polar residues. The tract at residues 320-367 (KNYKNASGVVNSSPRSHSATNGSIPSSSSKNEKKQKCTSKSPSAHKDL) is disordered. An N-linked (GlcNAc...) asparagine glycan is attached at N324. A Phosphoserine modification is found at S332. N-linked (GlcNAc...) asparagine glycosylation is found at N340 and N452. A disordered region spans residues 630 to 664 (TSPLSPVSPHYSSKFVETSPSGLDPNASVYQPLKK). A phosphoserine mark is found at S631 and S634. N655 carries N-linked (GlcNAc...) asparagine glycosylation.

It belongs to the macoilin family.

It localises to the rough endoplasmic reticulum membrane. The protein resides in the nucleus membrane. Its function is as follows. Plays a role in the regulation of neuronal activity. The sequence is that of Macoilin (MACO1) from Sus scrofa (Pig).